The primary structure comprises 533 residues: Glycoprotein (533 aa).

Residues 1–19 (MPLNAVIFTLLLRCSICLG) form the signal peptide. The Virion surface portion of the chain corresponds to 20 to 459 (KFPFYTIPDK…DLGLPEWKRY (440 aa)). A helical membrane pass occupies residues 460 to 480 (FLIGVSAVALLALSIIIAVCC). Cys-480 carries the S-palmitoyl cysteine; by host lipid modification. At 481 to 533 (KRFRKRKKSKPGPVELTRKVSVISKGNGPVPSWESYKEGTTGDVRNTTPSTRE) the chain is on the intravirion side. Residues 492–533 (GPVELTRKVSVISKGNGPVPSWESYKEGTTGDVRNTTPSTRE) form a disordered region. A compositionally biased stretch (polar residues) spans 523-533 (DVRNTTPSTRE).

It belongs to the lyssavirus glycoprotein family. Homotrimer. Interacts with matrix protein. In terms of processing, glycosylated and palmitoylated by host. Glycosylation is crucial for glycoprotein export at the cell surface.

It localises to the virion membrane. In terms of biological role, attaches the virus to host cellular receptor, inducing endocytosis of the virion. In the endosome, the acidic pH induces conformational changes in the glycoprotein trimer, which trigger fusion between virus and cell membrane. The protein is Glycoprotein (G) of Duvenhage virus (DUVV).